Consider the following 125-residue polypeptide: MPTINQLLRKKSSRQAPKLKSKKPALAGCPQKRGVCFRVYTRTPKKPNSALRKVAKIRLCNGIVVIASIPGEGHNLQEHSVVCIRGGRVKDLPGVKYKVVRGRLDLQGVVNRKQSRSLYGTPKSK.

The interval 1-26 (MPTINQLLRKKSSRQAPKLKSKKPAL) is disordered. Over residues 8–23 (LRKKSSRQAPKLKSKK) the composition is skewed to basic residues.

It belongs to the universal ribosomal protein uS12 family.

It is found in the mitochondrion. The chain is Small ribosomal subunit protein uS12m (RPS12) from Prototheca wickerhamii.